The primary structure comprises 493 residues: MANYFNTLNLRQKLDQLGRCRFMDRNEFADGCNFLKGKKIVIVGCGAQGLNQGLNMRDSGLDISYALRAEAIAEKRASFTRATENGFKVGTYQELIPTADLVINLTPDKQHSKVVADVVPLMKQGSAFGYSHGFNIVEEGEQIRKDITVVMTAPKCPGTEVREEYKRGFGVPTLIAVHPENDPKGEGMAIAKAWASATGGDRAGVLESSFVAEVKSDLMGEQTILCGMLQAGSIVCYDKLVADGKDPAYASKLIQYGWETITEALKQGGITLMMDRLSNAAKIRAFELSEEIKVQLNDLYLKHMDDIISGEFSSTMMADWANGDVNLFKWREETGKTAFENSPKADGIKISEQEYFDNGVVMVAMVKAGVEMAFDAMVASGIYEESAYYESLHELPLIANTIARKRLYEMNVVISDTAEYGNYLFSHVATPILAEKLIPMLQKGDLGEPTPAAEIDNVYLRDINDAIRNHPVELIGQELRGYMTDMKRISSQG.

In terms of domain architecture, KARI N-terminal Rossmann spans 14-208 (LDQLGRCRFM…GGDRAGVLES (195 aa)). NADP(+)-binding positions include 45 to 48 (CGAQ), R68, R76, S78, and 108 to 110 (DKQ). The active site involves H132. An NADP(+)-binding site is contributed by G158. KARI C-terminal knotted domains are found at residues 209–345 (SFVA…SPKA) and 346–486 (DGIK…MTDM). Residues D217, E221, E390, and E394 each contribute to the Mg(2+) site. S415 is a binding site for substrate.

The protein belongs to the ketol-acid reductoisomerase family. It depends on Mg(2+) as a cofactor.

It carries out the reaction (2R)-2,3-dihydroxy-3-methylbutanoate + NADP(+) = (2S)-2-acetolactate + NADPH + H(+). It catalyses the reaction (2R,3R)-2,3-dihydroxy-3-methylpentanoate + NADP(+) = (S)-2-ethyl-2-hydroxy-3-oxobutanoate + NADPH + H(+). It functions in the pathway amino-acid biosynthesis; L-isoleucine biosynthesis; L-isoleucine from 2-oxobutanoate: step 2/4. It participates in amino-acid biosynthesis; L-valine biosynthesis; L-valine from pyruvate: step 2/4. In terms of biological role, involved in the biosynthesis of branched-chain amino acids (BCAA). Catalyzes an alkyl-migration followed by a ketol-acid reduction of (S)-2-acetolactate (S2AL) to yield (R)-2,3-dihydroxy-isovalerate. In the isomerase reaction, S2AL is rearranged via a Mg-dependent methyl migration to produce 3-hydroxy-3-methyl-2-ketobutyrate (HMKB). In the reductase reaction, this 2-ketoacid undergoes a metal-dependent reduction by NADPH to yield (R)-2,3-dihydroxy-isovalerate. This is Ketol-acid reductoisomerase (NADP(+)) from Actinobacillus pleuropneumoniae serotype 3 (strain JL03).